The chain runs to 795 residues: Protein translocase subunit SecA 2 (795 aa).

ATP is bound by residues Gln-84, 102–106 (GEGKT), and Asp-496.

Belongs to the SecA family. Monomer and homodimer. Part of the essential Sec protein translocation apparatus which comprises SecA, SecYEG and auxiliary proteins SecDF. Other proteins may also be involved.

It localises to the cell membrane. The protein localises to the cytoplasm. It carries out the reaction ATP + H2O + cellular proteinSide 1 = ADP + phosphate + cellular proteinSide 2.. In terms of biological role, part of the Sec protein translocase complex. Interacts with the SecYEG preprotein conducting channel. Has a central role in coupling the hydrolysis of ATP to the transfer of proteins into and across the cell membrane, serving as an ATP-driven molecular motor driving the stepwise translocation of polypeptide chains across the membrane. In Streptococcus agalactiae serotype V (strain ATCC BAA-611 / 2603 V/R), this protein is Protein translocase subunit SecA 2.